The primary structure comprises 270 residues: 4-hydroxy-tetrahydrodipicolinate reductase (270 aa).

7 to 12 is an NAD(+) binding site; sequence GVSGRM. An NADP(+)-binding site is contributed by Arg34. Residues 97–99 and 121–124 each bind NAD(+); these read GTT and SGNM. His155 functions as the Proton donor/acceptor in the catalytic mechanism. His156 lines the (S)-2,3,4,5-tetrahydrodipicolinate pocket. The Proton donor role is filled by Lys159. 165 to 166 provides a ligand contact to (S)-2,3,4,5-tetrahydrodipicolinate; that stretch reads GT.

It belongs to the DapB family.

Its subcellular location is the cytoplasm. It carries out the reaction (S)-2,3,4,5-tetrahydrodipicolinate + NAD(+) + H2O = (2S,4S)-4-hydroxy-2,3,4,5-tetrahydrodipicolinate + NADH + H(+). The enzyme catalyses (S)-2,3,4,5-tetrahydrodipicolinate + NADP(+) + H2O = (2S,4S)-4-hydroxy-2,3,4,5-tetrahydrodipicolinate + NADPH + H(+). It participates in amino-acid biosynthesis; L-lysine biosynthesis via DAP pathway; (S)-tetrahydrodipicolinate from L-aspartate: step 4/4. Functionally, catalyzes the conversion of 4-hydroxy-tetrahydrodipicolinate (HTPA) to tetrahydrodipicolinate. This Allorhizobium ampelinum (strain ATCC BAA-846 / DSM 112012 / S4) (Agrobacterium vitis (strain S4)) protein is 4-hydroxy-tetrahydrodipicolinate reductase.